Here is a 258-residue protein sequence, read N- to C-terminus: Methylthioribulose-1-phosphate dehydratase (258 aa).

The segment at 1 to 21 (MCSPTTENNNNNNDHLVQSSD) is disordered. Residue cysteine 105 coordinates substrate. 2 residues coordinate Zn(2+): histidine 123 and histidine 125. Glutamate 153 (proton donor/acceptor) is an active-site residue. Residue histidine 210 participates in Zn(2+) binding.

Belongs to the aldolase class II family. MtnB subfamily. It depends on Zn(2+) as a cofactor.

Its subcellular location is the cytoplasm. It catalyses the reaction 5-(methylsulfanyl)-D-ribulose 1-phosphate = 5-methylsulfanyl-2,3-dioxopentyl phosphate + H2O. It functions in the pathway amino-acid biosynthesis; L-methionine biosynthesis via salvage pathway; L-methionine from S-methyl-5-thio-alpha-D-ribose 1-phosphate: step 2/6. Its function is as follows. Catalyzes the dehydration of methylthioribulose-1-phosphate (MTRu-1-P) into 2,3-diketo-5-methylthiopentyl-1-phosphate (DK-MTP-1-P). This Neurospora crassa (strain ATCC 24698 / 74-OR23-1A / CBS 708.71 / DSM 1257 / FGSC 987) protein is Methylthioribulose-1-phosphate dehydratase.